The sequence spans 2297 residues: Xin actin-binding repeat-containing protein 1 (2297 aa).

The segment covering 1 to 11 has biased composition (basic and acidic residues); that stretch reads MAEVAKQKKAT. Residues 1 to 28 are disordered; that stretch reads MAEVAKQKKATEAVCGDEDFPPPPPPLP. Xin repeat units follow at residues 104–119, 139–154, 169–184, 208–223, 248–263, 286–301, 323–338, 362–377, and 396–411; these read GEVQ…WTLD, GDVK…STFD, GDVR…QPLD, GDVT…KPLD, GDVK…DPCC, SDFK…QPLD, GGVD…QPLD, ADVH…QPLS, and GNVG…QPMD. A compositionally biased stretch (basic and acidic residues) spans 433-442; sequence GEVQDKRMQF. Residues 433 to 461 form a disordered region; sequence GEVQDKRMQFEKSTAGKTAGDSGNKVQND. Xin repeat units follow at residues 464-479, 494-509, 532-547, 570-585, 605-620, 638-653, 677-692, 715-730, 747-762, 779-794, 818-833, 856-871, 893-908, and 928-943; these read GDVK…LPLN, GDVK…TPLY, GNVQ…RPLD, DDTR…QPLD, SNVK…KPMD, ADVK…QPLD, VNVK…EPLD, GDVS…KSLG, GSVH…QPIG, GDVG…LSLD, VNVK…QPLY, GDVR…KPLD, GDVK…QPLD, and KCVQ…EQAS. Ser952 is subject to Phosphoserine. Xin repeat units follow at residues 959–974, 997–1012, and 1033–1048; these read GDVR…QPID, GDVK…QSLD, and ADVK…TPLD. Disordered regions lie at residues 1617–1680, 1866–1900, 2147–2191, and 2243–2297; these read PSSH…KDQK, KENI…VPSI, SAAR…PRRK, and ELSS…TEKH. Low complexity-rich tracts occupy residues 1618–1630 and 1644–1656; these read SSHT…VSVT and SVSS…KNSS. 2 stretches are compositionally biased toward basic and acidic residues: residues 1876-1885 and 2151-2162; these read SNKDELHFTS and KPAESPTDKPKT. The span at 2166–2180 shows a compositional bias: low complexity; it reads QSNAGSSSSQNSSAS. Over residues 2259 to 2278 the composition is skewed to polar residues; sequence GMTSPVLQRSGQSFSSNSLS.

The protein belongs to the Xin family. In terms of tissue distribution, expressed at intercalated disks in the heart (at protein level).

It localises to the cell junction. The protein resides in the adherens junction. Its subcellular location is the desmosome. Its function is as follows. Positively regulates organization of the outer plexiform layer and Muller glia cells in the retina. May protect actin filaments from depolymerization. May play a role in development of normal skeletal muscle morphology and muscle fiber type composition. In Danio rerio (Zebrafish), this protein is Xin actin-binding repeat-containing protein 1.